The primary structure comprises 177 residues: Large ribosomal subunit protein uL6 (177 aa).

The protein belongs to the universal ribosomal protein uL6 family. Part of the 50S ribosomal subunit.

Functionally, this protein binds to the 23S rRNA, and is important in its secondary structure. It is located near the subunit interface in the base of the L7/L12 stalk, and near the tRNA binding site of the peptidyltransferase center. This chain is Large ribosomal subunit protein uL6, found in Rickettsia prowazekii (strain Madrid E).